Consider the following 302-residue polypeptide: MPSPAVDLLKQKTASLPNAPISVVAANTFVPPTQPVTAGNQLPTSVPLPVLPAVEAAKRLAAYAAVDRHIAHEHKVIGIGSGSTVPYVVDRILAQGFEANKDRVFLPTGFQSKELIVKAGLTLGDVDQYARIDVTIDGADEVDNELNSIKGGGACQLREKVLAEAADTWIIVADYRKNSEVLGTSWTKGIPIEVVPFAYAKVLTNLAHMGSPHVLPNGQPGLSLRMGKMKAGPVVSDNGNFIIDAPFAEELMRQPEELLHKIKMLTGVVEVGLFCGMAKAAYFGNEDGSVTIRSDDGTISQL.

Belongs to the ribose 5-phosphate isomerase family.

Its subcellular location is the cytoplasm. The catalysed reaction is aldehydo-D-ribose 5-phosphate = D-ribulose 5-phosphate. It functions in the pathway carbohydrate degradation; pentose phosphate pathway; D-ribose 5-phosphate from D-ribulose 5-phosphate (non-oxidative stage): step 1/1. The protein is Ribose-5-phosphate isomerase (RKI1) of Cryptococcus neoformans var. neoformans serotype D (strain B-3501A) (Filobasidiella neoformans).